The primary structure comprises 571 residues: PHD and RING finger domain-containing protein C126.07c (571 aa).

The segment at 18-79 (CIICLSNLPN…RVANTCPLCR (62 aa)) adopts an RING-type 1; atypical zinc-finger fold. A PHD-type zinc finger spans residues 122–170 (TCRCVICGRSDHAEVLLLCDGCDDAYHTYCLNMDAVPIEEFYCPNCVLL). The RING-type 2; degenerate zinc finger occupies 125 to 168 (CVICGRSDHAEVLLLCDGCDDAYHTYCLNMDAVPIEEFYCPNCV). The segment covering 305 to 324 (ATEATISNPRPSSGRFQQTP) has biased composition (polar residues). The tract at residues 305 to 377 (ATEATISNPR…VLGNNSSSKS (73 aa)) is disordered. The segment covering 346 to 356 (RRQKRPTRRHI) has biased composition (basic residues). Over residues 359–377 (SNKSSGSSTVLGNNSSSKS) the composition is skewed to polar residues.

Its subcellular location is the cytoplasm. The protein localises to the nucleus. The chain is PHD and RING finger domain-containing protein C126.07c from Schizosaccharomyces pombe (strain 972 / ATCC 24843) (Fission yeast).